A 567-amino-acid polypeptide reads, in one-letter code: Urease subunit alpha (567 aa).

A Urease domain is found at 129–567 (GGVDTHIHFI…LPMAQRYFLF (439 aa)). Residues His134, His136, and Lys217 each contribute to the Ni(2+) site. Lys217 carries the N6-carboxylysine modification. Residue His219 coordinates substrate. Ni(2+)-binding residues include His246 and His272. The active-site Proton donor is the His320. Asp360 contributes to the Ni(2+) binding site.

Belongs to the metallo-dependent hydrolases superfamily. Urease alpha subunit family. As to quaternary structure, heterotrimer of UreA (gamma), UreB (beta) and UreC (alpha) subunits. Three heterotrimers associate to form the active enzyme. The cofactor is Ni cation. Post-translationally, carboxylation allows a single lysine to coordinate two nickel ions.

The protein localises to the cytoplasm. It carries out the reaction urea + 2 H2O + H(+) = hydrogencarbonate + 2 NH4(+). It functions in the pathway nitrogen metabolism; urea degradation; CO(2) and NH(3) from urea (urease route): step 1/1. The protein is Urease subunit alpha of Proteus hauseri.